The sequence spans 300 residues: Glycerol-3-phosphate dehydrogenase [NAD(P)+] (300 aa).

Residues W11, K33, and K79 each contribute to the NADPH site. Residues K79, G107, and S109 each coordinate sn-glycerol 3-phosphate. A111 lines the NADPH pocket. K161, D214, S224, R225, and N226 together coordinate sn-glycerol 3-phosphate. The active-site Proton acceptor is K161. R225 lines the NADPH pocket. 2 residues coordinate NADPH: V249 and E251.

It belongs to the NAD-dependent glycerol-3-phosphate dehydrogenase family.

The protein resides in the cytoplasm. It catalyses the reaction sn-glycerol 3-phosphate + NAD(+) = dihydroxyacetone phosphate + NADH + H(+). It carries out the reaction sn-glycerol 3-phosphate + NADP(+) = dihydroxyacetone phosphate + NADPH + H(+). Its pathway is membrane lipid metabolism; glycerophospholipid metabolism. Its function is as follows. Catalyzes the reduction of the glycolytic intermediate dihydroxyacetone phosphate (DHAP) to sn-glycerol 3-phosphate (G3P), the key precursor for phospholipid synthesis. The chain is Glycerol-3-phosphate dehydrogenase [NAD(P)+] from Campylobacter lari (strain RM2100 / D67 / ATCC BAA-1060).